The primary structure comprises 173 residues: Large ribosomal subunit protein bL12m (173 aa).

A mitochondrion-targeting transit peptide spans 1–33 (MFRIASRQTRNLRALSSSKNWARSLVNTRSFRA).

It belongs to the bacterial ribosomal protein bL12 family. In terms of assembly, component of the mitochondrial large ribosomal subunit (mt-LSU). Mature yeast 74S mitochondrial ribosomes consist of a small (37S) and a large (54S) subunit. The 37S small subunit contains a 15S ribosomal RNA (15S mt-rRNA) and at least 32 different proteins. The 54S large subunit contains a 21S rRNA (21S mt-rRNA) and at least 45 different proteins.

It localises to the mitochondrion. In terms of biological role, component of the mitochondrial ribosome (mitoribosome), a dedicated translation machinery responsible for the synthesis of mitochondrial genome-encoded proteins, including at least some of the essential transmembrane subunits of the mitochondrial respiratory chain. The mitoribosomes are attached to the mitochondrial inner membrane and translation products are cotranslationally integrated into the membrane. This Schizosaccharomyces pombe (strain 972 / ATCC 24843) (Fission yeast) protein is Large ribosomal subunit protein bL12m (mrpl12).